The chain runs to 88 residues: FXYD domain-containing ion transport regulator 3 (88 aa).

The not cleaved signal peptide spans 1–20; the sequence is MQEVVLSLLVLLAGLPTLDA. Residues 1-38 are Extracellular-facing; that stretch reads MQEVVLSLLVLLAGLPTLDANDPENKNDPFYYDWYSLR. Residues 39-59 traverse the membrane as a helical segment; it reads VGGLICAGILCALGIIVLMSG. At 60–88 the chain is on the cytoplasmic side; the sequence is KCKCKFRQKPSHRPGEGPPLITPGSAHNC. The segment at 67-88 is disordered; sequence QKPSHRPGEGPPLITPGSAHNC.

It belongs to the FXYD family. Regulatory subunit of the sodium/potassium-transporting ATPase which is composed of a catalytic alpha subunit, a non-catalytic beta subunit and an additional regulatory subunit. Interacts with catalytic alpha subunit ATP1A1. Also interacts with non-catalytic beta subunit ATP1B1. Interacts with the ATP1A1-ATP1B1, ATP1A2-ATP1B1 and ATP1A3-ATP1B1 NKA isozymes. In terms of processing, glutathionylated. In terms of tissue distribution, expressed at high levels in heart, skeletal muscle and liver with low levels of expression in breast, brain, lung, stomach and colon. In the gastric gland, mainly expressed in the mucus cells forming the upper part of the gland and is absent from the parietal cells.

It is found in the cell membrane. In terms of biological role, associates with and regulates the activity of the sodium/potassium-transporting ATPase (NKA) which transports Na(+) out of the cell and K(+) into the cell. Reduces glutathionylation of the NKA beta-1 subunit ATP1B1, thus reversing glutathionylation-mediated inhibition of ATP1B1. Induces a hyperpolarization-activated chloride current when expressed in Xenopus oocytes. The sequence is that of FXYD domain-containing ion transport regulator 3 (Fxyd3) from Mus musculus (Mouse).